Consider the following 473-residue polypeptide: Glutamate--tRNA ligase (473 aa).

Residues 11-21 (PSPTGFLHIGG) carry the 'HIGH' region motif. The 'KMSKS' region motif lies at 240 to 244 (KLSKR). Lysine 243 provides a ligand contact to ATP.

This sequence belongs to the class-I aminoacyl-tRNA synthetase family. Glutamate--tRNA ligase type 1 subfamily. In terms of assembly, monomer.

It is found in the cytoplasm. It catalyses the reaction tRNA(Glu) + L-glutamate + ATP = L-glutamyl-tRNA(Glu) + AMP + diphosphate. In terms of biological role, catalyzes the attachment of glutamate to tRNA(Glu) in a two-step reaction: glutamate is first activated by ATP to form Glu-AMP and then transferred to the acceptor end of tRNA(Glu). The protein is Glutamate--tRNA ligase of Afipia carboxidovorans (strain ATCC 49405 / DSM 1227 / KCTC 32145 / OM5) (Oligotropha carboxidovorans).